Here is a 69-residue protein sequence, read N- to C-terminus: Trypsin/subtilisin inhibitor (69 aa).

A disulfide bridge connects residues Cys4 and Cys49.

Belongs to the protease inhibitor I13 (potato type I serine protease inhibitor) family.

Inhibitor of trypsin, chymotrypsin, subtilisin, etc. The protein is Trypsin/subtilisin inhibitor of Amaranthus caudatus (Love-lies-bleeding).